Consider the following 3750-residue polypeptide: Cubilin homolog (3750 aa).

A signal peptide spans 1–28; that stretch reads MEGAARSRLLLCWTLLAIITDTWPIAEG. N-linked (GlcNAc...) asparagine glycans are attached at residues Asn-51 and Asn-123. In terms of domain architecture, EGF-like 1 spans 154–190; it reads EANSCASGPCENGGTCYNTYTGFRCQCRSAFEGTKCE. 6 disulfides stabilise this stretch: Cys-158–Cys-169, Cys-163–Cys-178, Cys-180–Cys-189, Cys-196–Cys-212, Cys-206–Cys-221, and Cys-223–Cys-232. In terms of domain architecture, EGF-like 2; calcium-binding spans 192–233; the sequence is DVNECALYEGTDLGCQNGGQCQNHFGTYSCLCQPGWHGMHCT. The 27-residue stretch at 282-308 folds into the EGF-like 3; calcium-binding domain; the sequence is DVDECSDSAAHKPCSTSCINLPGSFTC. In terms of domain architecture, EGF-like 4; calcium-binding spans 324–352; sequence DLDECQTNNGGCSLSPKVDCINTYGSYHC. N-linked (GlcNAc...) asparagine glycosylation occurs at Asn-424. 2 consecutive EGF-like domains span residues 426-463 and 465-503; these read TTTN…PICE and QPSP…RLCE. 7 cysteine pairs are disulfide-bonded: Cys-430–Cys-441, Cys-435–Cys-451, Cys-453–Cys-462, Cys-469–Cys-480, Cys-474–Cys-491, Cys-493–Cys-502, and Cys-509–Cys-535. The N-linked (GlcNAc...) asparagine glycan is linked to Asn-448. CUB domains lie at 509 to 623, 627 to 738, 744 to 852, 853 to 971, 978 to 1095, 1100 to 1212, 1216 to 1331, 1332 to 1434, 1439 to 1550, 1554 to 1670, 1671 to 1788, 1792 to 1902, and 1903 to 2001; these read CNGM…WNSM, CGGR…YSVE, CGGV…YRMA, CDYK…YRAL, CGGV…YTFE, CGGH…WRIF, CGGS…YKAN, CIRN…QLDY, CMEE…YRTV, CGGK…FHES, CGQT…YMTM, CGSI…YNYE, and HHNE…WNRL. Asn-542 and Asn-548 each carry an N-linked (GlcNAc...) asparagine glycan. Cys-562 and Cys-584 are oxidised to a cystine. N-linked (GlcNAc...) asparagine glycosylation occurs at Asn-609. 6 disulfide bridges follow: Cys-627-Cys-654, Cys-681-Cys-701, Cys-744-Cys-770, Cys-853-Cys-879, Cys-913-Cys-933, and Cys-978-Cys-1004. The N-linked (GlcNAc...) asparagine glycan is linked to Asn-871. 3 residues coordinate Ca(2+): Glu-1026, Asp-1034, and Asp-1080. A disulfide bridge links Cys-1031 with Cys-1058. An intrachain disulfide couples Cys-1100 to Cys-1126. Asn-1119 carries an N-linked (GlcNAc...) asparagine glycan. A Ca(2+)-binding site is contributed by Glu-1148. An N-linked (GlcNAc...) asparagine glycan is attached at Asn-1152. The cysteines at positions 1153 and 1175 are disulfide-linked. Ca(2+) is bound by residues Asp-1156 and Asp-1197. An intrachain disulfide couples Cys-1216 to Cys-1242. Residues Glu-1264, Asp-1272, and Asp-1316 each contribute to the Ca(2+) site. Cysteines 1269 and 1292 form a disulfide. Residues Cys-1332 and Cys-1360 are joined by a disulfide bond. Residues Asn-1335, Asn-1359, Asn-1413, and Asn-1424 are each glycosylated (N-linked (GlcNAc...) asparagine). An intrachain disulfide couples Cys-1439 to Cys-1465. N-linked (GlcNAc...) asparagine glycosylation is present at Asn-1491. Cystine bridges form between Cys-1492–Cys-1513, Cys-1554–Cys-1580, Cys-1607–Cys-1631, Cys-1671–Cys-1697, Cys-1733–Cys-1755, Cys-1792–Cys-1818, and Cys-1845–Cys-1866. An N-linked (GlcNAc...) asparagine glycan is attached at Asn-1694. Asn-1908 and Asn-2009 each carry an N-linked (GlcNAc...) asparagine glycan. 2 cysteine pairs are disulfide-bonded: Cys-2019/Cys-2048 and Cys-2077/Cys-2100. 5 CUB domains span residues 2019–2139, 2140–2256, 2262–2383, 2385–2512, and 2516–2646; these read CGNQ…VRTA, CGSE…FRFE, DSGR…LSVA, CGGS…YTSL, and CGET…MNEV. 4 N-linked (GlcNAc...) asparagine glycosylation sites follow: Asn-2092, Asn-2128, Asn-2152, and Asn-2231. Cys-2140 and Cys-2167 are disulfide-bonded. Cys-2324 and Cys-2346 form a disulfide bridge. An N-linked (GlcNAc...) asparagine glycan is attached at Asn-2377. Residues Cys-2385 and Cys-2416 are joined by a disulfide bond. Asn-2442 carries an N-linked (GlcNAc...) asparagine glycan. Intrachain disulfides connect Cys-2445/Cys-2474 and Cys-2516/Cys-2542. Residues Asn-2655, Asn-2671, Asn-2682, and Asn-2772 are each glycosylated (N-linked (GlcNAc...) asparagine). 2 disulfide bridges follow: Cys-2761–Cys-2790 and Cys-2837–Cys-2859. 8 CUB domains span residues 2761-2895, 2898-3010, 3011-3128, 3130-3246, 3249-3364, 3368-3512, 3522-3615, and 3623-3736; these read CGGV…IKYG, CGGK…FERN, CGGL…YTSR, CGGI…VRVM, CDEK…INAI, CGSS…VALN, LQGR…YLAS, and CGGQ…FAGV. Asn-2885 and Asn-2889 each carry an N-linked (GlcNAc...) asparagine glycan. 2 disulfide bridges follow: Cys-2898–Cys-2921 and Cys-2949–Cys-2973. 3 N-linked (GlcNAc...) asparagine glycosylation sites follow: Asn-2960, Asn-2965, and Asn-2982. A disulfide bridge links Cys-3011 with Cys-3039. Residues Asn-3040 and Asn-3074 are each glycosylated (N-linked (GlcNAc...) asparagine). Disulfide bonds link Cys-3070–Cys-3092 and Cys-3130–Cys-3157. Residue Asn-3160 is glycosylated (N-linked (GlcNAc...) asparagine). Cystine bridges form between Cys-3184–Cys-3207, Cys-3249–Cys-3278, Cys-3305–Cys-3327, and Cys-3368–Cys-3402. A glycan (N-linked (GlcNAc...) asparagine) is linked at Asn-3256. Asn-3427 is a glycosylation site (N-linked (GlcNAc...) asparagine). A disulfide bond links Cys-3430 and Cys-3475. N-linked (GlcNAc...) asparagine glycosylation is found at Asn-3543, Asn-3572, and Asn-3645. 3 disulfide bridges follow: Cys-3560/Cys-3579, Cys-3623/Cys-3649, and Cys-3676/Cys-3699.

In terms of tissue distribution, specifically expressed in nephrocytes.

It is found in the cell membrane. In terms of biological role, required in the nephrocyte for normal uptake of proteins and elimination of toxins, and for maintenance of endocytic trafficking structures. May function together with Amnionless. In Drosophila melanogaster (Fruit fly), this protein is Cubilin homolog.